We begin with the raw amino-acid sequence, 85 residues long: Beta-insect depressant toxin BmKITa (85 aa).

An N-terminal signal peptide occupies residues methionine 1–alanine 21. The LCN-type CS-alpha/beta domain maps to aspartate 22–glycine 82. Intrachain disulfides connect cysteine 31–cysteine 81, cysteine 35–cysteine 56, cysteine 42–cysteine 63, and cysteine 46–cysteine 65. Glycine 82 bears the Glycine amide mark.

Expressed by the venom gland.

It is found in the secreted. Depressant insect beta-toxins cause a transient contraction paralysis followed by a slow flaccid paralysis. They bind voltage-independently at site-4 of sodium channels (Nav) and shift the voltage of activation toward more negative potentials thereby affecting sodium channel activation and promoting spontaneous and repetitive firing. This toxin also displays an evident analgesic effect but is devoid of any toxicity on mice. The chain is Beta-insect depressant toxin BmKITa from Olivierus martensii (Manchurian scorpion).